We begin with the raw amino-acid sequence, 506 residues long: Aldehyde dehydrogenase (506 aa).

240–245 (GSTEIG) provides a ligand contact to NAD(+). Catalysis depends on residues E262 and C301.

It belongs to the aldehyde dehydrogenase family.

The enzyme catalyses an aldehyde + NAD(+) + H2O = a carboxylate + NADH + 2 H(+). It participates in alcohol metabolism; ethanol degradation; acetate from ethanol: step 2/2. May be involved in V.cholerae virulence, as its expression is under the control of ToxR, a transcriptional activator of several genes associated with virulence. This Vibrio cholerae serotype O1 (strain ATCC 39541 / Classical Ogawa 395 / O395) protein is Aldehyde dehydrogenase (aldA).